The chain runs to 266 residues: Probable carboxylesterase Os04g0669500 (266 aa).

Residues Ser-154, Asp-208, and His-240 each act as charge relay system in the active site.

It belongs to the AB hydrolase superfamily. AB hydrolase 2 family.

Functionally, possesses carboxylesterase activity in vitro. This Oryza sativa subsp. japonica (Rice) protein is Probable carboxylesterase Os04g0669500.